Reading from the N-terminus, the 280-residue chain is Bifunctional protein FolD (280 aa).

NADP(+)-binding positions include G159–S161, S184, and I225.

This sequence belongs to the tetrahydrofolate dehydrogenase/cyclohydrolase family. As to quaternary structure, homodimer.

It catalyses the reaction (6R)-5,10-methylene-5,6,7,8-tetrahydrofolate + NADP(+) = (6R)-5,10-methenyltetrahydrofolate + NADPH. It carries out the reaction (6R)-5,10-methenyltetrahydrofolate + H2O = (6R)-10-formyltetrahydrofolate + H(+). It functions in the pathway one-carbon metabolism; tetrahydrofolate interconversion. Catalyzes the oxidation of 5,10-methylenetetrahydrofolate to 5,10-methenyltetrahydrofolate and then the hydrolysis of 5,10-methenyltetrahydrofolate to 10-formyltetrahydrofolate. The polypeptide is Bifunctional protein FolD (Methanosphaerula palustris (strain ATCC BAA-1556 / DSM 19958 / E1-9c)).